A 241-amino-acid polypeptide reads, in one-letter code: Ubiquinone biosynthesis O-methyltransferase (241 aa).

The S-adenosyl-L-methionine site is built by R46, G66, D87, and M131.

Belongs to the methyltransferase superfamily. UbiG/COQ3 family.

It carries out the reaction a 3-demethylubiquinol + S-adenosyl-L-methionine = a ubiquinol + S-adenosyl-L-homocysteine + H(+). The enzyme catalyses a 3-(all-trans-polyprenyl)benzene-1,2-diol + S-adenosyl-L-methionine = a 2-methoxy-6-(all-trans-polyprenyl)phenol + S-adenosyl-L-homocysteine + H(+). Its pathway is cofactor biosynthesis; ubiquinone biosynthesis. O-methyltransferase that catalyzes the 2 O-methylation steps in the ubiquinone biosynthetic pathway. This chain is Ubiquinone biosynthesis O-methyltransferase, found in Bordetella parapertussis (strain 12822 / ATCC BAA-587 / NCTC 13253).